The following is a 920-amino-acid chain: Histone-lysine N-methyltransferase, H3 lysine-4 specific (920 aa).

Residues 94 to 179 enclose the RRM domain; sequence TQVFVSNISP…KPLSVVLDRD (86 aa). Residues 205–216 are compositionally biased toward basic and acidic residues; it reads KQRFEREDESSR. Disordered stretches follow at residues 205–242 and 448–485; these read KQRF…TLSN and KRVD…YQLN. Polar residues-rich tracts occupy residues 233 to 242 and 453 to 462; these read PSKNSQTLSN and SKMNLSAGSK. Over residues 463 to 476 the composition is skewed to basic residues; the sequence is TKSKLQRRRRRRHE. Positions 749-754 match the RxxxRR motif motif; the sequence is RVNNRR. Residues 781 to 898 form the SET domain; that stretch reads KQLHFGPSRI…HGEELTYDYK (118 aa). S-adenosyl-L-methionine is bound at residue Tyr-897. Positions 904 to 920 constitute a Post-SET domain; sequence DKIPCLCGAPTCRGYLN.

The protein belongs to the class V-like SAM-binding methyltransferase superfamily. As to quaternary structure, component of the Set1C/COMPASS complex composed of ash2, sdc1, set1, shg1, spp1, swd1, swd2 and swd3.

It is found in the nucleus. Its subcellular location is the chromosome. The enzyme catalyses L-lysyl(4)-[histone H3] + 3 S-adenosyl-L-methionine = N(6),N(6),N(6)-trimethyl-L-lysyl(4)-[histone H3] + 3 S-adenosyl-L-homocysteine + 3 H(+). It carries out the reaction N(6)-methyl-L-lysyl(4)-[histone H3] + S-adenosyl-L-methionine = N(6),N(6)-dimethyl-L-lysyl(4)-[histone H3] + S-adenosyl-L-homocysteine + H(+). It catalyses the reaction N(6),N(6)-dimethyl-L-lysyl(4)-[histone H3] + S-adenosyl-L-methionine = N(6),N(6),N(6)-trimethyl-L-lysyl(4)-[histone H3] + S-adenosyl-L-homocysteine + H(+). In terms of biological role, catalytic component of the COMPASS (Set1C) complex that specifically mono-, di- and trimethylates histone H3 to form H3K4me1/2/3. Binds RNA which might negatively affect its histone methyltransferase activity. COMPASS recognizes ubiquitinated H2B on one face of the nucleosome which stimulates the methylation of H3 on the opposing face. Methylation promotes maintenance of active chromatin states at euchromatic chromosomal domains and is present throughout the cell cycle. Plays a role in telomere maintenance and DNA repair in an ATM kinase rad3-dependent pathway. Required for efficient telomeric and centromeric silencing. In Schizosaccharomyces pombe (strain 972 / ATCC 24843) (Fission yeast), this protein is Histone-lysine N-methyltransferase, H3 lysine-4 specific.